The chain runs to 267 residues: tRNA (guanine-N(1)-)-methyltransferase (267 aa).

S-adenosyl-L-methionine-binding positions include glycine 119 and 139–144 (IGDYVL).

Belongs to the RNA methyltransferase TrmD family. As to quaternary structure, homodimer.

The protein localises to the cytoplasm. The catalysed reaction is guanosine(37) in tRNA + S-adenosyl-L-methionine = N(1)-methylguanosine(37) in tRNA + S-adenosyl-L-homocysteine + H(+). Functionally, specifically methylates guanosine-37 in various tRNAs. The polypeptide is tRNA (guanine-N(1)-)-methyltransferase (Chromohalobacter salexigens (strain ATCC BAA-138 / DSM 3043 / CIP 106854 / NCIMB 13768 / 1H11)).